We begin with the raw amino-acid sequence, 886 residues long: Protein suppressor of hairy wing (886 aa).

Disordered regions lie at residues 24-62 (SVSP…GIKG) and 167-211 (DEVV…KNSG). The span at 184 to 201 (VTEEEEEEEEDDLDEEGD) shows a compositional bias: acidic residues. Residues 221-243 (HVCGKCYKTFRRLMSLKKHLEFC) form a C2H2-type 1; atypical zinc finger. A C2H2-type 2 zinc finger spans residues 291 to 314 (INCPDCPKSFKTQTSYERHIFITH). The C2H2-type 3; atypical zinc-finger motif lies at 320 to 342 (YPCSICNANLRSEALLKLHEEQH). C2H2-type zinc fingers lie at residues 349–367 (YACK…LKRH), 381–403 (MSCK…LKHH), 414–436 (YMCH…IRTH), 442–464 (FDCD…RRYH), 470–492 (YSCT…MKRH), 498–520 (HKCE…SKTH), 524–546 (FACD…VKEH), 554–578 (FSCT…AGDH), and 600–623 (TDCA…RSVH). The span at 571 to 587 (QHMDAGDHSEKSGEKPQ) shows a compositional bias: basic and acidic residues. The tract at residues 571–594 (QHMDAGDHSEKSGEKPQRAKRSST) is disordered.

It is found in the nucleus. Functionally, component of the gypsy chromatin insulator complex which is required for the function of the gypsy chromatin insulator and other endogenous chromatin insulators. Chromatin insulators are regulatory elements which establish independent domains of transcriptional activity within eukaryotic genomes. Insulators have two defining properties; they can block the communication between an enhancer and a promoter when placed between them and can also buffer transgenes from position effect variegation (PEV). Insulators are proposed to structure the chromatin fiber into independent domains of differing transcriptional potential by promoting the formation of distinct chromatin loops. This chromatin looping may involve the formation of insulator bodies, where homotypic interactions between individual subunits of the insulator complex could promote the clustering of widely spaced insulators at the nuclear periphery. Within the gypsy insulator complex, this protein binds specifically to a region of the gypsy element located 3' of the 5' long terminal repeat (LTR), and may also mediate interaction with other endogenous insulators at sites distinct from those recognized by Cp190. Cooperates with pita and cliff to recruit Cp190 and regulate insulator function at the front-ultraabdominal (Fub) boundary. This is Protein suppressor of hairy wing (su(Hw)) from Drosophila ananassae (Fruit fly).